A 184-amino-acid polypeptide reads, in one-letter code: Photosystem I assembly protein Ycf4 (184 aa).

2 helical membrane passes run 20-42 and 57-79; these read VNLC…GFSS and IAFI…LGLY.

Belongs to the Ycf4 family.

It is found in the plastid. It localises to the chloroplast thylakoid membrane. Seems to be required for the assembly of the photosystem I complex. The protein is Photosystem I assembly protein Ycf4 of Adiantum capillus-veneris (Maidenhair fern).